The chain runs to 412 residues: Alpha-1-antiproteinase (412 aa).

The signal sequence occupies residues 1 to 24 (MPSSISWGLLLLAGLCCLAPGSLA). Residue S33 is modified to Phosphoserine. N65, N102, N165, and N266 each carry an N-linked (GlcNAc...) asparagine glycan. Residues 368 to 387 (GVTVLEAIPMSLPPDVRFDR) form an RCL region. The residue at position 378 (S378) is a Phosphoserine.

The protein belongs to the serpin family. Interacts with CELA2A. Interacts with ERGIC3 and LMAN1/ERGIC53. Interacts with PRSS1/Trypsin. As to expression, plasma.

It is found in the secreted. Its function is as follows. Inhibitor of serine proteases. This Callosciurus caniceps (Gray-bellied squirrel) protein is Alpha-1-antiproteinase.